The sequence spans 285 residues: 2,3,4,5-tetrahydropyridine-2,6-dicarboxylate N-succinyltransferase (285 aa).

Positions 111 and 148 each coordinate substrate.

This sequence belongs to the transferase hexapeptide repeat family. As to quaternary structure, homotrimer.

Its subcellular location is the cytoplasm. The catalysed reaction is (S)-2,3,4,5-tetrahydrodipicolinate + succinyl-CoA + H2O = (S)-2-succinylamino-6-oxoheptanedioate + CoA. It functions in the pathway amino-acid biosynthesis; L-lysine biosynthesis via DAP pathway; LL-2,6-diaminopimelate from (S)-tetrahydrodipicolinate (succinylase route): step 1/3. The sequence is that of 2,3,4,5-tetrahydropyridine-2,6-dicarboxylate N-succinyltransferase from Rhizobium rhizogenes (strain K84 / ATCC BAA-868) (Agrobacterium radiobacter).